We begin with the raw amino-acid sequence, 468 residues long: Glutamate--tRNA ligase (468 aa).

Positions Pro12–Asn22 match the 'HIGH' region motif. A 'KMSKS' region motif is present at residues Lys244 to Arg248. An ATP-binding site is contributed by Lys247.

Belongs to the class-I aminoacyl-tRNA synthetase family. Glutamate--tRNA ligase type 1 subfamily. Monomer.

Its subcellular location is the cytoplasm. It carries out the reaction tRNA(Glu) + L-glutamate + ATP = L-glutamyl-tRNA(Glu) + AMP + diphosphate. Its function is as follows. Catalyzes the attachment of glutamate to tRNA(Glu) in a two-step reaction: glutamate is first activated by ATP to form Glu-AMP and then transferred to the acceptor end of tRNA(Glu). This chain is Glutamate--tRNA ligase, found in Polynucleobacter necessarius subsp. necessarius (strain STIR1).